The primary structure comprises 337 residues: Inositol 2-dehydrogenase (337 aa).

Belongs to the Gfo/Idh/MocA family. In terms of assembly, homotetramer.

The enzyme catalyses myo-inositol + NAD(+) = scyllo-inosose + NADH + H(+). In terms of biological role, involved in the oxidation of myo-inositol (MI) to 2-keto-myo-inositol (2KMI or 2-inosose). The polypeptide is Inositol 2-dehydrogenase (Klebsiella pneumoniae subsp. pneumoniae (strain ATCC 700721 / MGH 78578)).